The following is a 167-amino-acid chain: Alanine- and arginine-rich domain-containing protein (167 aa).

A disordered region spans residues 140-167 (LKKRQDQELASKPQSPQDKEMNSECGSA).

In terms of tissue distribution, preferentially expressed in testis both in embryo and adult. Expressed at much lower level in other tissues.

In Mus musculus (Mouse), this protein is Alanine- and arginine-rich domain-containing protein (Aard).